The primary structure comprises 306 residues: NAD kinase 1 (306 aa).

D67 serves as the catalytic Proton acceptor. NAD(+) contacts are provided by residues 67–68 (DG), 149–150 (ND), and D181.

It belongs to the NAD kinase family. Requires a divalent metal cation as cofactor.

It is found in the cytoplasm. The catalysed reaction is NAD(+) + ATP = ADP + NADP(+) + H(+). In terms of biological role, involved in the regulation of the intracellular balance of NAD and NADP, and is a key enzyme in the biosynthesis of NADP. Catalyzes specifically the phosphorylation on 2'-hydroxyl of the adenosine moiety of NAD to yield NADP. The protein is NAD kinase 1 of Synechococcus sp. (strain ATCC 27144 / PCC 6301 / SAUG 1402/1) (Anacystis nidulans).